Reading from the N-terminus, the 218-residue chain is Sodium channel regulatory subunit beta-1 (218 aa).

The first 18 residues, methionine 1 to tryptophan 18, serve as a signal peptide directing secretion. Residues glycine 19 to isoleucine 157 are Extracellular-facing. Disulfide bonds link cysteine 21-cysteine 43 and cysteine 40-cysteine 121. In terms of domain architecture, Ig-like C2-type spans valine 22–alanine 150. Residues asparagine 93, asparagine 110, asparagine 114, and asparagine 135 are each glycosylated (N-linked (GlcNAc...) asparagine). The helical transmembrane segment at valine 158–valine 179 threads the bilayer. Over tyrosine 180–glutamate 218 the chain is Cytoplasmic.

This sequence belongs to the sodium channel auxiliary subunit SCN1B (TC 8.A.17) family. A voltage-gated sodium (Nav) channel consists of an ion-conducting pore-forming alpha subunit functional on its own that is regulated by one or more beta subunits. Interacts with SCN1A; regulatory subunit of SCN1A/Nav1.1. Interacts with SCN3A; regulatory subunit of SCN3A/Nav1.3. Interacts with SCN4A; regulatory subunit of SCN4A/Nav1.4. Interacts with SCN5A; regulatory subunit of SCN5A/Nav1.5. Interacts with SCN8A; regulatory subunit of SCN8A/Nav1.6. Interacts with SCN9A; regulatory subunit of SCN9A/Nav1.7. Interacts with SCN10A; regulatory subunit of SCN10A/Nav1.8. Interacts with NFASC. Interacts with TMEM65.

It localises to the cell membrane. The protein localises to the perikaryon. Its subcellular location is the cell projection. It is found in the axon. In terms of biological role, regulatory subunit of multiple voltage-gated sodium (Nav) channels directly mediating the depolarization of excitable membranes. Navs, also called VGSCs (voltage-gated sodium channels) or VDSCs (voltage-dependent sodium channels), operate by switching between closed and open conformations depending on the voltage difference across the membrane. In the open conformation they allow Na(+) ions to selectively pass through the pore, along their electrochemical gradient. The influx of Na+ ions provokes membrane depolarization, initiating the propagation of electrical signals throughout cells and tissues. The accessory beta subunits participate in localization and functional modulation of the Nav channels. Modulates the activity of SCN1A/Nav1.1, SCN2A/Nav1.2, SCN3A/Nav1.3, SCN4A/Nav1.4, SCN5A/Nav1.5, SCN8A/Nav1.6, SCN9A/Nav1.7 and SCN10A/Nav1.8. In Oryctolagus cuniculus (Rabbit), this protein is Sodium channel regulatory subunit beta-1.